A 471-amino-acid chain; its full sequence is Dynein regulatory complex subunit 4 (471 aa).

Residues Met-1–Gly-24 are disordered. Coiled coils occupy residues Glu-23–Ile-239 and Leu-282–Lys-425.

Belongs to the DRC4 family. In terms of assembly, component of the nexin-dynein regulatory complex (N-DRC). Interacts with DRC1, DRC2 and DRC5.

The protein localises to the cytoplasm. The protein resides in the cytoskeleton. It localises to the flagellum axoneme. Its subcellular location is the flagellum basal body. Functionally, component of the nexin-dynein regulatory complex (N-DRC), a key regulator of ciliary/flagellar motility which maintains the alignment and integrity of the distal axoneme and regulates microtubule sliding in motile axonemes. Plays an important role in the assembly of the N-DRC linker. This is Dynein regulatory complex subunit 4 from Chlamydomonas reinhardtii (Chlamydomonas smithii).